Consider the following 310-residue polypeptide: Glutaminase (310 aa).

The substrate site is built by serine 67, asparagine 118, glutamate 161, asparagine 168, tyrosine 192, tyrosine 244, and valine 262.

Belongs to the glutaminase family. As to quaternary structure, homotetramer.

It carries out the reaction L-glutamine + H2O = L-glutamate + NH4(+). The sequence is that of Glutaminase from Legionella pneumophila subsp. pneumophila (strain Philadelphia 1 / ATCC 33152 / DSM 7513).